The chain runs to 594 residues: F-box/LRR-repeat protein At3g58980 (594 aa).

The F-box domain maps to 1-49 (MDRISNLPNEIICHIVSFLSAKEAAFASILSKRWRNLFTIVIKLQFDDS). LRR repeat units follow at residues 103–125 (ILDL…VFTC), 128–151 (LVKL…DAFL), 152–174 (PALE…AFEK), 203–218 (SPTL…DLYE), 219–242 (CEFT…AVPD), 249–272 (LDSL…GYVD), 288–314 (LRNV…AIPV), 315–339 (FKNL…FLPF), 344–369 (CPNL…VCHC), 403–414 (LEKLSGLKLVKL), 415–437 (HSLT…SSKC), 450–474 (LPSL…AFQK), 503–518 (SQTL…YWAE), 519–541 (HNLE…AHVP), and 584–594 (LRNVEILRLWM).

In Arabidopsis thaliana (Mouse-ear cress), this protein is F-box/LRR-repeat protein At3g58980.